A 261-amino-acid polypeptide reads, in one-letter code: MTHQTHAYHMVNPSPWPLTGALSALLLTSGLVMWFHYNSTILLSLGLLTNILTMYQWWRDIIREGTYQGHHTPIVQKGLRYGMILFIVSEVFFFAGFFWAFYHSSLVPTHDLGGCWPPTGITPLNPLEVPLLNTSVLLASGVSITWAHHSLMEGNRNHMNQALLITILLGLYFTILQASEYFETSFSISDGIYGSTFFMATGFHGLHVIIGSTFLIVCLLRQLKFHFTSKHHFGFEAAAWYWHFVDVVWLFLYVSIYWWGS.

Residues 2–15 (THQTHAYHMVNPSP) are Mitochondrial matrix-facing. Residues 16 to 34 (WPLTGALSALLLTSGLVMW) traverse the membrane as a helical segment. Over 35–40 (FHYNST) the chain is Mitochondrial intermembrane. Residues 41 to 66 (ILLSLGLLTNILTMYQWWRDIIREGT) traverse the membrane as a helical segment. At 67–72 (YQGHHT) the chain is on the mitochondrial matrix side. Residues 73–105 (PIVQKGLRYGMILFIVSEVFFFAGFFWAFYHSS) traverse the membrane as a helical segment. Topologically, residues 106–128 (LVPTHDLGGCWPPTGITPLNPLE) are mitochondrial intermembrane. The helical transmembrane segment at 129–152 (VPLLNTSVLLASGVSITWAHHSLM) threads the bilayer. Topologically, residues 153-155 (EGN) are mitochondrial matrix. A helical transmembrane segment spans residues 156–183 (RNHMNQALLITILLGLYFTILQASEYFE). Topologically, residues 184–190 (TSFSISD) are mitochondrial intermembrane. The helical transmembrane segment at 191–223 (GIYGSTFFMATGFHGLHVIIGSTFLIVCLLRQL) threads the bilayer. At 224–232 (KFHFTSKHH) the chain is on the mitochondrial matrix side. A helical transmembrane segment spans residues 233–256 (FGFEAAAWYWHFVDVVWLFLYVSI). Residues 257–261 (YWWGS) lie on the Mitochondrial intermembrane side of the membrane.

This sequence belongs to the cytochrome c oxidase subunit 3 family. In terms of assembly, component of the cytochrome c oxidase (complex IV, CIV), a multisubunit enzyme composed of 14 subunits. The complex is composed of a catalytic core of 3 subunits MT-CO1, MT-CO2 and MT-CO3, encoded in the mitochondrial DNA, and 11 supernumerary subunits COX4I, COX5A, COX5B, COX6A, COX6B, COX6C, COX7A, COX7B, COX7C, COX8 and NDUFA4, which are encoded in the nuclear genome. The complex exists as a monomer or a dimer and forms supercomplexes (SCs) in the inner mitochondrial membrane with NADH-ubiquinone oxidoreductase (complex I, CI) and ubiquinol-cytochrome c oxidoreductase (cytochrome b-c1 complex, complex III, CIII), resulting in different assemblies (supercomplex SCI(1)III(2)IV(1) and megacomplex MCI(2)III(2)IV(2)).

Its subcellular location is the mitochondrion inner membrane. It carries out the reaction 4 Fe(II)-[cytochrome c] + O2 + 8 H(+)(in) = 4 Fe(III)-[cytochrome c] + 2 H2O + 4 H(+)(out). Component of the cytochrome c oxidase, the last enzyme in the mitochondrial electron transport chain which drives oxidative phosphorylation. The respiratory chain contains 3 multisubunit complexes succinate dehydrogenase (complex II, CII), ubiquinol-cytochrome c oxidoreductase (cytochrome b-c1 complex, complex III, CIII) and cytochrome c oxidase (complex IV, CIV), that cooperate to transfer electrons derived from NADH and succinate to molecular oxygen, creating an electrochemical gradient over the inner membrane that drives transmembrane transport and the ATP synthase. Cytochrome c oxidase is the component of the respiratory chain that catalyzes the reduction of oxygen to water. Electrons originating from reduced cytochrome c in the intermembrane space (IMS) are transferred via the dinuclear copper A center (CU(A)) of subunit 2 and heme A of subunit 1 to the active site in subunit 1, a binuclear center (BNC) formed by heme A3 and copper B (CU(B)). The BNC reduces molecular oxygen to 2 water molecules using 4 electrons from cytochrome c in the IMS and 4 protons from the mitochondrial matrix. The chain is Cytochrome c oxidase subunit 3 from Rattus norvegicus (Rat).